Consider the following 20-residue polypeptide: Protein PR-L5 (20 aa).

Belongs to the BetVI family.

This chain is Protein PR-L5, found in Lupinus luteus (European yellow lupine).